The sequence spans 206 residues: Small ribosomal subunit protein uS4 (206 aa).

The S4 RNA-binding domain occupies 96–156; sequence TRLDNVVYRM…EKSRTQARIK (61 aa).

Belongs to the universal ribosomal protein uS4 family. Part of the 30S ribosomal subunit. Contacts protein S5. The interaction surface between S4 and S5 is involved in control of translational fidelity.

Functionally, one of the primary rRNA binding proteins, it binds directly to 16S rRNA where it nucleates assembly of the body of the 30S subunit. With S5 and S12 plays an important role in translational accuracy. The polypeptide is Small ribosomal subunit protein uS4 (Shewanella putrefaciens (strain CN-32 / ATCC BAA-453)).